A 199-amino-acid chain; its full sequence is Large ribosomal subunit protein uL5 (199 aa).

This sequence belongs to the universal ribosomal protein uL5 family. Part of the 50S ribosomal subunit; part of the 5S rRNA/L5/L18/L25 subcomplex. Contacts the 5S rRNA and the P site tRNA. Forms a bridge to the 30S subunit in the 70S ribosome.

Functionally, this is one of the proteins that bind and probably mediate the attachment of the 5S RNA into the large ribosomal subunit, where it forms part of the central protuberance. In the 70S ribosome it contacts protein S13 of the 30S subunit (bridge B1b), connecting the 2 subunits; this bridge is implicated in subunit movement. Contacts the P site tRNA; the 5S rRNA and some of its associated proteins might help stabilize positioning of ribosome-bound tRNAs. The protein is Large ribosomal subunit protein uL5 of Frankia casuarinae (strain DSM 45818 / CECT 9043 / HFP020203 / CcI3).